A 211-amino-acid polypeptide reads, in one-letter code: Rho-related GTP-binding protein RhoF (211 aa).

Methionine 1 is modified (N-acetylmethionine). Glycine 26–threonine 33 contributes to the GTP binding site. Residues tyrosine 48–tyrosine 56 carry the Effector region motif. GTP is bound by residues aspartate 73–glutamine 77 and cysteine 131–aspartate 134. Cysteine methyl ester is present on cysteine 208. The S-geranylgeranyl cysteine moiety is linked to residue cysteine 208. Residues leucine 209–leucine 211 constitute a propeptide, removed in mature form.

This sequence belongs to the small GTPase superfamily. Rho family.

Its subcellular location is the cell membrane. The protein localises to the cytoplasm. It is found in the cytoskeleton. In terms of biological role, plasma membrane-associated small GTPase which cycles between an active GTP-bound and an inactive GDP-bound state. Causes the formation of thin, actin-rich surface projections called filopodia. Functions cooperatively with CDC42 and Rac to generate additional structures, increasing the diversity of actin-based morphology. The polypeptide is Rho-related GTP-binding protein RhoF (Rhof) (Mus musculus (Mouse)).